Consider the following 70-residue polypeptide: Ranatuerin-2SN1 (70 aa).

The signal sequence occupies residues 1 to 22 (MFTLKKSLLLIFFLGTISLSLC). The propeptide at 23–40 (EKERDADDDEVEVIKQEE) is removed in mature form. Cys65 and Cys70 are oxidised to a cystine.

The protein belongs to the frog skin active peptide (FSAP) family. Ranatuerin subfamily. As to expression, expressed by the skin glands.

Its subcellular location is the secreted. Functionally, antimicrobial peptide. Weakly active against P.faecalis X29. Not active against fungi. Shows very weak hemolytic activity against human erythrocytes. This Sylvirana spinulosa (Fine-spined frog) protein is Ranatuerin-2SN1.